We begin with the raw amino-acid sequence, 286 residues long: MKRLKRTADLRALVADWRREGLRVGLVPTMGNLHEGHLALAEYLAPHCDRLVTSIFVNPLQFGPNEDYESYPRTFGEDCAGLEARGVDAVFAPPVEEMYRGGVRQATRVEVGALAERLCGISRPGHFTGVATVVVKLFNLVQPDVAVFGRKDYQQLRVIEQVVSDLNIPVEVRGMPTVREPDGLAMSSRNGYLTQQERHIAPGLYRTLQGMAKRIRAGDDDYRRLEARGRAMLAEQGFQPDYLEVCRADDLTPAAPGDRGLVVAGAAWLGRARLIDNIELELNRDQ.

30 to 37 (MGNLHEGH) serves as a coordination point for ATP. Histidine 37 (proton donor) is an active-site residue. Glutamine 61 contributes to the (R)-pantoate binding site. Glutamine 61 lines the beta-alanine pocket. 149–152 (GRKD) is an ATP binding site. Residue glutamine 155 coordinates (R)-pantoate. Residues valine 178 and 186-189 (MSSR) each bind ATP.

The protein belongs to the pantothenate synthetase family. In terms of assembly, homodimer.

Its subcellular location is the cytoplasm. It catalyses the reaction (R)-pantoate + beta-alanine + ATP = (R)-pantothenate + AMP + diphosphate + H(+). Its pathway is cofactor biosynthesis; (R)-pantothenate biosynthesis; (R)-pantothenate from (R)-pantoate and beta-alanine: step 1/1. Catalyzes the condensation of pantoate with beta-alanine in an ATP-dependent reaction via a pantoyl-adenylate intermediate. This Alkalilimnicola ehrlichii (strain ATCC BAA-1101 / DSM 17681 / MLHE-1) protein is Pantothenate synthetase.